The sequence spans 352 residues: Protein RecA (352 aa).

67–74 (GPESSGKT) serves as a coordination point for ATP.

It belongs to the RecA family.

It localises to the cytoplasm. In terms of biological role, can catalyze the hydrolysis of ATP in the presence of single-stranded DNA, the ATP-dependent uptake of single-stranded DNA by duplex DNA, and the ATP-dependent hybridization of homologous single-stranded DNAs. It interacts with LexA causing its activation and leading to its autocatalytic cleavage. The chain is Protein RecA from Enterobacter sp. (strain 638).